A 642-amino-acid chain; its full sequence is 1-deoxy-D-xylulose-5-phosphate synthase 2 (642 aa).

Residues His73 and 113-115 (SHA) contribute to the thiamine diphosphate site. Asp144 is a Mg(2+) binding site. Thiamine diphosphate contacts are provided by residues 145 to 146 (GA), Asn174, Tyr285, and Glu366. Asn174 lines the Mg(2+) pocket.

It belongs to the transketolase family. DXPS subfamily. In terms of assembly, homodimer. It depends on Mg(2+) as a cofactor. Thiamine diphosphate serves as cofactor.

It carries out the reaction D-glyceraldehyde 3-phosphate + pyruvate + H(+) = 1-deoxy-D-xylulose 5-phosphate + CO2. Its pathway is metabolic intermediate biosynthesis; 1-deoxy-D-xylulose 5-phosphate biosynthesis; 1-deoxy-D-xylulose 5-phosphate from D-glyceraldehyde 3-phosphate and pyruvate: step 1/1. In terms of biological role, catalyzes the acyloin condensation reaction between C atoms 2 and 3 of pyruvate and glyceraldehyde 3-phosphate to yield 1-deoxy-D-xylulose-5-phosphate (DXP). The polypeptide is 1-deoxy-D-xylulose-5-phosphate synthase 2 (Streptomyces avermitilis (strain ATCC 31267 / DSM 46492 / JCM 5070 / NBRC 14893 / NCIMB 12804 / NRRL 8165 / MA-4680)).